A 185-amino-acid polypeptide reads, in one-letter code: Large ribosomal subunit protein uL22 (185 aa).

It belongs to the universal ribosomal protein uL22 family. As to quaternary structure, part of the 50S ribosomal subunit.

Its function is as follows. This protein binds specifically to 23S rRNA. It makes multiple contacts with different domains of the 23S rRNA in the assembled 50S subunit and ribosome. In terms of biological role, the globular domain of the protein is located near the polypeptide exit tunnel on the outside of the subunit, while an extended beta-hairpin is found that lines the wall of the exit tunnel in the center of the 70S ribosome. The protein is Large ribosomal subunit protein uL22 of Pyrobaculum aerophilum (strain ATCC 51768 / DSM 7523 / JCM 9630 / CIP 104966 / NBRC 100827 / IM2).